Here is a 70-residue protein sequence, read N- to C-terminus: Putative membrane protein insertion efficiency factor (70 aa).

The protein belongs to the UPF0161 family.

Its subcellular location is the cell inner membrane. Functionally, could be involved in insertion of integral membrane proteins into the membrane. This is Putative membrane protein insertion efficiency factor from Desulforapulum autotrophicum (strain ATCC 43914 / DSM 3382 / VKM B-1955 / HRM2) (Desulfobacterium autotrophicum).